Consider the following 874-residue polypeptide: Translation initiation factor IF-2 (874 aa).

Positions 1–262 are disordered; it reads MEDKNKTIKE…EKSTSDRDFS (262 aa). Residues 54–63 are compositionally biased toward pro residues; sequence SKPPVMPLPL. Residues 83-104 are compositionally biased toward basic and acidic residues; sequence AKREESPGKQDAGRPPRDKDTR. Over residues 141–222 the composition is skewed to gly residues; sequence SGGGYQGNRG…NRGPRSGGTG (82 aa). The segment covering 235–244 has biased composition (polar residues); the sequence is LSQSRGSSVT. Positions 250–262 are enriched in basic and acidic residues; the sequence is HDKEKSTSDRDFS. Residues 369–538 form the tr-type G domain; sequence NRPPVVTIMG…LLQAEVMDLK (170 aa). Positions 378–385 are G1; sequence GHVDHGKT. 378–385 serves as a coordination point for GTP; that stretch reads GHVDHGKT. Residues 403 to 407 form a G2 region; it reads GITQH. The segment at 424–427 is G3; sequence DTPG. GTP contacts are provided by residues 424–428 and 478–481; these read DTPGH and NKID. Residues 478-481 are G4; the sequence is NKID. A G5 region spans residues 514–516; it reads SAR.

It belongs to the TRAFAC class translation factor GTPase superfamily. Classic translation factor GTPase family. IF-2 subfamily.

The protein resides in the cytoplasm. Its function is as follows. One of the essential components for the initiation of protein synthesis. Protects formylmethionyl-tRNA from spontaneous hydrolysis and promotes its binding to the 30S ribosomal subunits. Also involved in the hydrolysis of GTP during the formation of the 70S ribosomal complex. The sequence is that of Translation initiation factor IF-2 from Leptospira interrogans serogroup Icterohaemorrhagiae serovar copenhageni (strain Fiocruz L1-130).